A 384-amino-acid chain; its full sequence is Outer membrane protein assembly factor BamB (384 aa).

Residues 1–16 form the signal peptide; the sequence is MKIRILVLILCALTQG. Cys-17 carries N-palmitoyl cysteine lipidation. Cys-17 carries S-diacylglycerol cysteine lipidation.

It belongs to the BamB family. Part of the Bam complex.

The protein resides in the cell outer membrane. Part of the outer membrane protein assembly complex, which is involved in assembly and insertion of beta-barrel proteins into the outer membrane. In Legionella pneumophila (strain Paris), this protein is Outer membrane protein assembly factor BamB.